Reading from the N-terminus, the 110-residue chain is Heat shock protein Hsp-12.2 (110 aa).

The sHSP domain maps to aspartate 15 to alanine 110.

This sequence belongs to the small heat shock protein (HSP20) family.

This chain is Heat shock protein Hsp-12.2 (hsp-12.2), found in Caenorhabditis elegans.